An 819-amino-acid polypeptide reads, in one-letter code: Lon protease (819 aa).

The disordered stretch occupies residues 1–36; that stretch reads MDSTTNSDSPILDPNPEDVEKLLDESEEESEDQSTE. Residues 43–240 enclose the Lon N-terminal domain; the sequence is LFILPLNKRP…KALILLKKEL (198 aa). 393–400 is an ATP binding site; it reads GPPGVGKT. In terms of domain architecture, Lon proteolytic spans 635-817; the sequence is STPVGVATGL…DDVLKVAFPK (183 aa). Residues Ser-723 and Lys-766 contribute to the active site.

The protein belongs to the peptidase S16 family. Homohexamer. Organized in a ring with a central cavity.

It localises to the cytoplasm. It catalyses the reaction Hydrolysis of proteins in presence of ATP.. Its function is as follows. ATP-dependent serine protease that mediates the selective degradation of mutant and abnormal proteins as well as certain short-lived regulatory proteins. Required for cellular homeostasis and for survival from DNA damage and developmental changes induced by stress. Degrades polypeptides processively to yield small peptide fragments that are 5 to 10 amino acids long. Binds to DNA in a double-stranded, site-specific manner. This is Lon protease from Chlamydia pneumoniae (Chlamydophila pneumoniae).